Consider the following 297-residue polypeptide: 1D-myo-inositol 2-acetamido-2-deoxy-alpha-D-glucopyranoside deacetylase (297 aa).

Residues His-11, Asp-14, and His-154 each coordinate Zn(2+).

It belongs to the MshB deacetylase family. Requires Zn(2+) as cofactor.

The catalysed reaction is 1D-myo-inositol 2-acetamido-2-deoxy-alpha-D-glucopyranoside + H2O = 1D-myo-inositol 2-amino-2-deoxy-alpha-D-glucopyranoside + acetate. Its function is as follows. Catalyzes the deacetylation of 1D-myo-inositol 2-acetamido-2-deoxy-alpha-D-glucopyranoside (GlcNAc-Ins) in the mycothiol biosynthesis pathway. The sequence is that of 1D-myo-inositol 2-acetamido-2-deoxy-alpha-D-glucopyranoside deacetylase from Tsukamurella paurometabola (strain ATCC 8368 / DSM 20162 / CCUG 35730 / CIP 100753 / JCM 10117 / KCTC 9821 / NBRC 16120 / NCIMB 702349 / NCTC 13040) (Corynebacterium paurometabolum).